A 664-amino-acid chain; its full sequence is Protein cueball (664 aa).

An N-terminal signal peptide occupies residues 1–21 (MRNLGIAVTFAVLLVIGYVTA). Topologically, residues 22 to 552 (LEWDAVVTTD…VTYCKNSFNR (531 aa)) are extracellular. 3 N-linked (GlcNAc...) asparagine glycosylation sites follow: N40, N140, and N188. LDL-receptor class B repeat units lie at residues 115–157 (RKLY…ENHD), 168–211 (RHLY…DHYN), and 212–257 (NRIY…NSQY). EGF-like domains follow at residues 367–399 (EIPI…FEGE), 402–438 (DRNI…ARCE), and 473–510 (EEYT…KRCE). Intrachain disulfides connect C371-C380, C375-C390, C406-C416, C410-C426, C428-C437, C477-C487, C481-C498, and C500-C509. N-linked (GlcNAc...) asparagine glycosylation is present at N431. An N-linked (GlcNAc...) asparagine glycan is attached at N491. N551 carries N-linked (GlcNAc...) asparagine glycosylation. A helical membrane pass occupies residues 553–573 (TVVYVSLAFTASLVTLVTILC). The Cytoplasmic portion of the chain corresponds to 574 to 664 (TVRRMYERNR…KLPSCVAEKN (91 aa)).

This sequence belongs to the cueball family.

The protein localises to the cell membrane. Its function is as follows. Has a role in spermatogenesis and oogenesis. This is Protein cueball from Aedes aegypti (Yellowfever mosquito).